The sequence spans 256 residues: POU domain class 2-associating factor 1 (256 aa).

The interval methionine 1 to arginine 23 is disordered. An OCA domain is found at alanine 16–histidine 38.

The protein belongs to the POU2AF family. Interacts with POU2F1/OCT1 and POU2F2/OCT2; the interaction increases POU2F1 and POU2F2 transactivation activity. Ubiquitinated; mediated by SIAH1 or SIAH2 and leading to its subsequent proteasomal degradation. As to expression, B-cell specific. Detected in mainly in spleen, but also in thymus, periphral blood leukocyte and small intestine.

Its subcellular location is the nucleus. In terms of biological role, transcriptional coactivator that specifically associates with either POU2F1/OCT1 or POU2F2/OCT2. It boosts the POU2F1/OCT1 mediated promoter activity and to a lesser extent, that of POU2F2/OCT2. It recognizes the POU domains of POU2F1/OCT1 and POU2F2/OCT2. It is essential for the response of B-cells to antigens and required for the formation of germinal centers. Regulates IL6 expression in B cells as POU2F2/OCT2 coactivator. The protein is POU domain class 2-associating factor 1 of Homo sapiens (Human).